Here is a 425-residue protein sequence, read N- to C-terminus: Histone-binding protein RBBP7 (425 aa).

N-acetylalanine is present on A2. Position 3 is a phosphoserine (S3). K4 is subject to N6-acetyllysine; alternate. A Glycyl lysine isopeptide (Lys-Gly) (interchain with G-Cter in SUMO2); alternate cross-link involves residue K4. K4 is covalently cross-linked (Glycyl lysine isopeptide (Lys-Gly) (interchain with G-Cter in ubiquitin); alternate). Residue T10 is modified to Phosphothreonine. 7 WD repeats span residues 47 to 122 (QWLP…KINH), 128 to 173 (RARY…LRLR), 181 to 217 (GLSW…KIVD), 228 to 269 (VVED…HLVD), 275 to 312 (VNCL…LHTF), 318 to 369 (EIFQ…LFIH), and 376 to 403 (ISDF…IWQM). The residue at position 95 (S95) is a Phosphoserine. A Glycyl lysine isopeptide (Lys-Gly) (interchain with G-Cter in SUMO2) cross-link involves residue K101. K119 carries the post-translational modification N6-acetyllysine. Residue K155 forms a Glycyl lysine isopeptide (Lys-Gly) (interchain with G-Cter in SUMO2) linkage. Residue K159 is modified to N6-acetyllysine; alternate. A Glycyl lysine isopeptide (Lys-Gly) (interchain with G-Cter in SUMO2); alternate cross-link involves residue K159. S354 bears the Phosphoserine mark.

It belongs to the WD repeat RBAP46/RBAP48/MSI1 family. As to quaternary structure, binds directly to helix 1 of the histone fold of histone H4, a region that is not accessible when H4 is in chromatin. Subunit of the type B histone acetyltransferase (HAT) complex, composed of RBBP7 and HAT1. Subunit of the core histone deacetylase (HDAC) complex, which is composed of HDAC1, HDAC2, RBBP4 and RBBP7. The core HDAC complex associates with SIN3A, ARID4B/SAP180, SAP18, SAP30, SAP130, SUDS3/SAP45 and possibly ARID4A/RBP1 and ING1 to form the SIN3 HDAC complex. Component of the nucleosome remodeling and deacetylase (NuRD) repressor complex, composed of core proteins MTA1, MTA2, MTA3, RBBP4, RBBP7, HDAC1, HDAC2, MBD2, MBD3, and peripherally associated proteins CDK2AP1, CDK2AP2, GATAD2A, GATAD2B, CHD3, CHD4 and CHD5. The exact stoichiometry of the NuRD complex is unknown, and some subunits such as MBD2 and MBD3, GATAD2A and GATAD2B, and CHD3, CHD4 and CHD5 define mutually exclusive NuRD complexes. The NuRD complex may interact with MBD3L1. The NuRD complex may interact with MBD3L2. Subunit of the PRC2/EED-EZH2 complex, which is composed of at least EED, EZH2, RBBP4, RBBP7 and SUZ12. The PRC2/EED-EZH2 complex may also associate with HDAC1. Component of the NURF-1 ISWI chromatin remodeling complex (also called the nucleosome-remodeling factor (NURF) complex) at least composed of SMARCA1, BPTF, RBBP4 and RBBP7. Within the complex interacts with SMARCA1. Component of the BPFT-SMARCA1 complex at least composed of SMARCA1, BPFT, RBBP4 and RBBP7; the complex is catalytically inactive and does not remodel chromatin. Within the complex interacts with SMARCA1. Interacts with BRCA1. Interacts with CDK2AP1. Interacts with CENPA. Interacts with CHD3. Interacts with CHD4. Interacts with CREBBP, and this interaction may be enhanced by the binding of phosphorylated CREB1 to CREBBP. Interacts with HDAC7. Interacts with MTA1. Interacts with PWWP2B. Interacts with RB1 (via viral protein-binding domain). Interacts with SUV39H1. As to expression, higher levels in brain, thymus, lung, spleen, kidney, testis, and ovary/uterus; lower levels in heart, liver, and muscle.

The protein localises to the nucleus. In terms of biological role, core histone-binding subunit that may target chromatin remodeling factors, histone acetyltransferases and histone deacetylases to their histone substrates in a manner that is regulated by nucleosomal DNA. Component of several complexes which regulate chromatin metabolism. These include the type B histone acetyltransferase (HAT) complex, which is required for chromatin assembly following DNA replication; the core histone deacetylase (HDAC) complex, which promotes histone deacetylation and consequent transcriptional repression; the nucleosome remodeling and histone deacetylase complex (the NuRD complex), which promotes transcriptional repression by histone deacetylation and nucleosome remodeling; and the PRC2/EED-EZH2 complex, which promotes repression of homeotic genes during development; and the NURF (nucleosome remodeling factor) complex. This Mus musculus (Mouse) protein is Histone-binding protein RBBP7 (Rbbp7).